The chain runs to 669 residues: Dymeclin (669 aa).

G2 is lipidated: N-myristoyl glycine.

Belongs to the dymeclin family. In terms of processing, myristoylated in vitro; myristoylation is not essential for protein targeting to Golgi compartment.

It localises to the cytoplasm. The protein localises to the golgi apparatus. In terms of biological role, necessary for correct organization of Golgi apparatus. The chain is Dymeclin (DYM) from Gallus gallus (Chicken).